The primary structure comprises 295 residues: Peptide transport system permease protein SapC (295 aa).

Helical transmembrane passes span 27-47 (IALF…FASY), 102-122 (LLVV…AGLL), 129-149 (FVGH…AVVI), 157-177 (LWNA…HTIY), 219-239 (VARA…ISLG), and 262-282 (PWTV…SIIF). In terms of domain architecture, ABC transmembrane type-1 spans 98–278 (LGSALLVVFS…GFAIIFTILL (181 aa)).

This sequence belongs to the binding-protein-dependent transport system permease family. OppBC subfamily.

The protein resides in the cell inner membrane. In terms of biological role, involved in a peptide intake transport system that plays a role in the resistance to antimicrobial peptides. The chain is Peptide transport system permease protein SapC (sapC) from Haemophilus influenzae (strain ATCC 51907 / DSM 11121 / KW20 / Rd).